Here is a 123-residue protein sequence, read N- to C-terminus: Non-specific lipid-transfer protein 3 (123 aa).

The signal sequence occupies residues 1–25 (MASSGQLLKLVCLVAVMCCMAVGGP). 4 cysteine pairs are disulfide-bonded: C33-C80, C43-C57, C58-C105, and C78-C119.

Belongs to the plant LTP family.

Plant non-specific lipid-transfer proteins transfer phospholipids as well as galactolipids across membranes. May play a role in wax or cutin deposition in the cell walls of expanding epidermal cells and certain secretory tissues. The chain is Non-specific lipid-transfer protein 3 from Prunus dulcis (Almond).